A 239-amino-acid chain; its full sequence is Ribonuclease 3 (239 aa).

The region spanning 12 to 137 (RLTLEAAIGH…LIAALYLDGG (126 aa)) is the RNase III domain. E50 lines the Mg(2+) pocket. The active site involves D54. Mg(2+) contacts are provided by D123 and E126. Residue E126 is part of the active site. Positions 162–231 (DAKTELQEWA…ATRILEREGI (70 aa)) constitute a DRBM domain.

This sequence belongs to the ribonuclease III family. As to quaternary structure, homodimer. Requires Mg(2+) as cofactor.

It is found in the cytoplasm. The enzyme catalyses Endonucleolytic cleavage to 5'-phosphomonoester.. Functionally, digests double-stranded RNA. Involved in the processing of primary rRNA transcript to yield the immediate precursors to the large and small rRNAs (23S and 16S). Processes some mRNAs, and tRNAs when they are encoded in the rRNA operon. Processes pre-crRNA and tracrRNA of type II CRISPR loci if present in the organism. This is Ribonuclease 3 from Rhizobium rhizogenes (strain K84 / ATCC BAA-868) (Agrobacterium radiobacter).